We begin with the raw amino-acid sequence, 178 residues long: Inorganic pyrophosphatase (178 aa).

Positions 30, 44, and 56 each coordinate substrate. 3 residues coordinate Mg(2+): Asp66, Asp71, and Asp103. Tyr140 is a binding site for substrate.

The protein belongs to the PPase family. Homohexamer. The cofactor is Mg(2+).

It localises to the cytoplasm. It carries out the reaction diphosphate + H2O = 2 phosphate + H(+). Catalyzes the hydrolysis of inorganic pyrophosphate (PPi) forming two phosphate ions. The polypeptide is Inorganic pyrophosphatase (Pyrococcus furiosus (strain ATCC 43587 / DSM 3638 / JCM 8422 / Vc1)).